The following is an 834-amino-acid chain: Probable receptor-like protein kinase At2g23200 (834 aa).

A signal peptide spans 1 to 28 (MENFCFQDSVSLFITIMVLVLLPRLSLS). Over 29–405 (DTSTYTRPEN…SSSRVHIITG (377 aa)) the chain is Extracellular. 10 N-linked (GlcNAc...) asparagine glycosylation sites follow: asparagine 61, asparagine 149, asparagine 221, asparagine 246, asparagine 277, asparagine 289, asparagine 314, asparagine 352, asparagine 361, and asparagine 394. Residues 406–426 (CAVAAAAASALVFSLLFMVFL) form a helical membrane-spanning segment. Residues 427-834 (KRRRSKKTKP…FSQLKISDAR (408 aa)) are Cytoplasmic-facing. The Protein kinase domain occupies 488–761 (FDEQLLIGKG…RDVIWDLEYV (274 aa)). ATP contacts are provided by residues 494–502 (IGKGGFGYV) and lysine 516. The Proton acceptor role is filled by aspartate 613.

The protein belongs to the protein kinase superfamily. Ser/Thr protein kinase family.

Its subcellular location is the membrane. The sequence is that of Probable receptor-like protein kinase At2g23200 from Arabidopsis thaliana (Mouse-ear cress).